The following is a 423-amino-acid chain: FAD-dependent monooxygenase asL6 (423 aa).

Residues 10–13 (AGVA), 34–35 (ER), Arg108, Tyr290, and Asp312 contribute to the FAD site. The chain crosses the membrane as a helical span at residues 371–391 (GMGMFQSKFGVGVFYVLLAII).

The protein belongs to the aromatic-ring hydroxylase family. It depends on FAD as a cofactor.

The protein localises to the membrane. It participates in secondary metabolite biosynthesis; terpenoid biosynthesis. Functionally, FAD-dependent monooxygenase; part of the gene cluster that mediates the biosynthesis of xenovulene A, an unusual meroterpenoid that has potent inhibitory effects on the human gamma-aminobutyrate A (GABAA) benzodiazepine receptor. The first step of xenovulene A biosynthesis is the biosynthesis of 3-methylorcinaldehyde performed by the non-reducing polyketide synthase aspks1. The salicylate hydroxylase asL1 then catalyzes the oxidative dearomatization of 3-methylorcinaldehyde to yield a dearomatized hydroxycyclohexadione. The 2-oxoglutarate-dependent dioxygenase asL3 further catalyzes the oxidative ring expansion to provide the first tropolone metabolite. The cytochrome P450 monooxygenase asR2 allows the synthesis of tropolone hemiacetal. In parallel, a previously unrecognised class of terpene cyclase, asR6, produces alpha-humulene from farnesylpyrophosphate (FPP). The putative Diels-Alderase asR5 probably catalyzes the formation of the tropolone-humulene skeleton by linking humulene and the polyketide moiety. Oxidative-ring contractions catalyzed by asL4 and asL6 then processively remove carbon atoms from the polyketide to yield xenovulene A. This chain is FAD-dependent monooxygenase asL6, found in Sarocladium schorii (Acremonium strictum (strain IMI 501407)).